The following is a 294-amino-acid chain: Acetylglutamate kinase (294 aa).

Residues 67–68, Arg89, and Asn193 contribute to the substrate site; that span reads GG.

This sequence belongs to the acetylglutamate kinase family. ArgB subfamily.

Its subcellular location is the cytoplasm. It catalyses the reaction N-acetyl-L-glutamate + ATP = N-acetyl-L-glutamyl 5-phosphate + ADP. Its pathway is amino-acid biosynthesis; L-arginine biosynthesis; N(2)-acetyl-L-ornithine from L-glutamate: step 2/4. Catalyzes the ATP-dependent phosphorylation of N-acetyl-L-glutamate. The chain is Acetylglutamate kinase from Leptospira interrogans serogroup Icterohaemorrhagiae serovar copenhageni (strain Fiocruz L1-130).